The primary structure comprises 362 residues: Glycyl-glycine endopeptidase ALE-1 (362 aa).

The first 35 residues, 1 to 35 (MDTNRKFTLVKSLSIGLGTFLVGSVFLTVNDEASA), serve as a signal peptide directing secretion. Positions 35 to 110 (ASTKVDAPKV…PAKADAPKVE (76 aa)) are disordered. Basic and acidic residues predominate over residues 40-110 (DAPKVEQEAP…PAKADAPKVE (71 aa)). Zn(2+) contacts are provided by histidine 150 and aspartate 154. The active site involves histidine 231. Histidine 233 serves as a coordination point for Zn(2+). Residues 282–350 (SESASFTANT…YLPVRTWNES (69 aa)) form the SH3b domain.

The protein belongs to the peptidase M23B family. Zn(2+) is required as a cofactor.

The protein localises to the secreted. The catalysed reaction is Hydrolysis of the -Gly-|-Gly- bond in the pentaglycine inter-peptide link joining staphylococcal cell wall peptidoglycans.. Functionally, lyses staphylococcal cells by hydrolyzing the polyglycine interpeptide bridges of the peptidoglycan. In Staphylococcus capitis, this protein is Glycyl-glycine endopeptidase ALE-1.